We begin with the raw amino-acid sequence, 120 residues long: Aspartate 1-decarboxylase (120 aa).

The active-site Schiff-base intermediate with substrate; via pyruvic acid is the Ser25. Ser25 bears the Pyruvic acid (Ser) mark. Thr57 contributes to the substrate binding site. Catalysis depends on Tyr58, which acts as the Proton donor. 73 to 75 (GAA) serves as a coordination point for substrate.

The protein belongs to the PanD family. As to quaternary structure, heterooctamer of four alpha and four beta subunits. Pyruvate is required as a cofactor. Is synthesized initially as an inactive proenzyme, which is activated by self-cleavage at a specific serine bond to produce a beta-subunit with a hydroxyl group at its C-terminus and an alpha-subunit with a pyruvoyl group at its N-terminus.

The protein localises to the cytoplasm. The enzyme catalyses L-aspartate + H(+) = beta-alanine + CO2. Its pathway is cofactor biosynthesis; (R)-pantothenate biosynthesis; beta-alanine from L-aspartate: step 1/1. In terms of biological role, catalyzes the pyruvoyl-dependent decarboxylation of aspartate to produce beta-alanine. The polypeptide is Aspartate 1-decarboxylase (Cupriavidus taiwanensis (strain DSM 17343 / BCRC 17206 / CCUG 44338 / CIP 107171 / LMG 19424 / R1) (Ralstonia taiwanensis (strain LMG 19424))).